The sequence spans 128 residues: Aspartate 1-decarboxylase (128 aa).

Ser25 acts as the Schiff-base intermediate with substrate; via pyruvic acid in catalysis. Pyruvic acid (Ser) is present on Ser25. Thr57 lines the substrate pocket. Tyr58 functions as the Proton donor in the catalytic mechanism. 73–75 (GSA) contacts substrate.

This sequence belongs to the PanD family. As to quaternary structure, heterooctamer of four alpha and four beta subunits. Pyruvate serves as cofactor. In terms of processing, is synthesized initially as an inactive proenzyme, which is activated by self-cleavage at a specific serine bond to produce a beta-subunit with a hydroxyl group at its C-terminus and an alpha-subunit with a pyruvoyl group at its N-terminus.

It is found in the cytoplasm. It catalyses the reaction L-aspartate + H(+) = beta-alanine + CO2. It participates in cofactor biosynthesis; (R)-pantothenate biosynthesis; beta-alanine from L-aspartate: step 1/1. Its function is as follows. Catalyzes the pyruvoyl-dependent decarboxylation of aspartate to produce beta-alanine. This chain is Aspartate 1-decarboxylase, found in Paraburkholderia phytofirmans (strain DSM 17436 / LMG 22146 / PsJN) (Burkholderia phytofirmans).